Consider the following 23-residue polypeptide: Dahlein-4.2 (23 aa).

Expressed by the skin dorsal glands.

The protein resides in the secreted. In terms of biological role, has no antimicrobial activity. The sequence is that of Dahlein-4.2 from Ranoidea dahlii (Dahl's aquatic frog).